The primary structure comprises 380 residues: DNA replication and repair protein RecF (380 aa).

30-37 is an ATP binding site; sequence GPNGFGKT.

It belongs to the RecF family.

It localises to the cytoplasm. In terms of biological role, the RecF protein is involved in DNA metabolism; it is required for DNA replication and normal SOS inducibility. RecF binds preferentially to single-stranded, linear DNA. It also seems to bind ATP. This is DNA replication and repair protein RecF from Mycobacterium sp. (strain JLS).